A 491-amino-acid chain; its full sequence is Aspartyl/glutamyl-tRNA(Asn/Gln) amidotransferase subunit B (491 aa).

Belongs to the GatB/GatE family. GatB subfamily. Heterotrimer of A, B and C subunits.

It catalyses the reaction L-glutamyl-tRNA(Gln) + L-glutamine + ATP + H2O = L-glutaminyl-tRNA(Gln) + L-glutamate + ADP + phosphate + H(+). It carries out the reaction L-aspartyl-tRNA(Asn) + L-glutamine + ATP + H2O = L-asparaginyl-tRNA(Asn) + L-glutamate + ADP + phosphate + 2 H(+). Its function is as follows. Allows the formation of correctly charged Asn-tRNA(Asn) or Gln-tRNA(Gln) through the transamidation of misacylated Asp-tRNA(Asn) or Glu-tRNA(Gln) in organisms which lack either or both of asparaginyl-tRNA or glutaminyl-tRNA synthetases. The reaction takes place in the presence of glutamine and ATP through an activated phospho-Asp-tRNA(Asn) or phospho-Glu-tRNA(Gln). The sequence is that of Aspartyl/glutamyl-tRNA(Asn/Gln) amidotransferase subunit B from Nostoc sp. (strain PCC 7120 / SAG 25.82 / UTEX 2576).